The primary structure comprises 160 residues: Cytochrome c-type biogenesis protein CcmE (160 aa).

The Cytoplasmic segment spans residues 1–8 (MNPRRKNR). A helical; Signal-anchor for type II membrane protein transmembrane segment spans residues 9 to 29 (LILVMLVLVGLGLATALVMYA). Residues 30–160 (LRSNIDLFYT…AVGDNSVRPS (131 aa)) are Periplasmic-facing. 2 residues coordinate heme: His130 and Tyr134. The span at 133–148 (KYTPPEIEDAMKKDHP) shows a compositional bias: basic and acidic residues. The interval 133 to 160 (KYTPPEIEDAMKKDHPAQAVGDNSVRPS) is disordered.

The protein belongs to the CcmE/CycJ family.

The protein resides in the cell inner membrane. Heme chaperone required for the biogenesis of c-type cytochromes. Transiently binds heme delivered by CcmC and transfers the heme to apo-cytochromes in a process facilitated by CcmF and CcmH. This Erwinia tasmaniensis (strain DSM 17950 / CFBP 7177 / CIP 109463 / NCPPB 4357 / Et1/99) protein is Cytochrome c-type biogenesis protein CcmE.